We begin with the raw amino-acid sequence, 624 residues long: MENSDSNDKGSGDQSAAQRRSQMDRLDREEAFYQFVNNLSEEDYRLMRDNNLLGTPGESTEEELLRRLQQIKEGPPPQNSDENRGGDSSDDVSNGDSIIDWLNSVRQTGNTTRSGQRGNQSWRAVSRTNPNSGDFRFSLEINVNRNNGSQNSENENEPSARRSSGENVENNSQRQVENPRSESTSARPSRSERNSTEALTEVPPTRGQRRARSRSPDHRRTRARAERSRSPLHPMSEIPRRSHHSISSQTFEHPLVNETEGSSRTRHHVTLRQQISGPELLSRGLFAASGTRNASQGAGSSDTAASGESTGSGQRPPTIVLDLQVRRVRPGEYRQRDSIASRTRSRSQTPNNTVTYESERGGFRRTFSRSERAGVRTYVSTIRIPIRRILNTGLSETTSVAIQTMLRQIMTGFGELSYFMYSDSDSEPTGSVSNRNMERAESRSGRGGSGGGSSSGSSSSSSSSSSSSSSSSSSSSPSSSSGGESSETSSDLFEGSNEGSSSSGSSGARREGRHRAPVTFDESGSLPFLSLAQFFLLNEDDDDQPRGLTKEQIDNLAMRSFGENDALKTCSVCITEYTEGNKLRKLPCSHEYHVHCIDRWLSENSTCPICRRAVLASGNRESVV.

Met-1 is subject to N-acetylmethionine. Positions 1–11 are enriched in basic and acidic residues; that stretch reads MENSDSNDKGS. 5 disordered regions span residues 1-25, 72-251, 257-276, 291-363, and 424-522; these read MENS…QMDR, KEGP…SQTF, NETE…QQIS, TRNA…RGGF, and SDSE…TFDE. A compositionally biased stretch (polar residues) spans 104-132; that stretch reads SVRQTGNTTRSGQRGNQSWRAVSRTNPNS. Residues 142–153 show a composition bias toward low complexity; that stretch reads NVNRNNGSQNSE. At Ser-164 the chain carries Phosphoserine. Polar residues predominate over residues 165 to 188; it reads GENVENNSQRQVENPRSESTSARP. Residues Ser-195, Ser-228, Ser-230, and Ser-276 each carry the phosphoserine modification. Residues 214-229 are compositionally biased toward basic and acidic residues; that stretch reads RSPDHRRTRARAERSR. Residues 291 to 315 show a composition bias toward polar residues; it reads TRNASQGAGSSDTAASGESTGSGQR. Residues 329 to 339 show a composition bias toward basic and acidic residues; that stretch reads RPGEYRQRDSI. Residues 340 to 356 are compositionally biased toward polar residues; the sequence is ASRTRSRSQTPNNTVTY. Residues 445 to 454 show a composition bias toward gly residues; that stretch reads GRGGSGGGSS. Over residues 455 to 507 the composition is skewed to low complexity; sequence SGSSSSSSSSSSSSSSSSSSSSPSSSSGGESSETSSDLFEGSNEGSSSSGSSG. The RING-type zinc-finger motif lies at 570-611; sequence CSVCITEYTEGNKLRKLPCSHEYHVHCIDRWLSENSTCPICR. A PDZ-binding motif is present at residues 621 to 624; it reads ESVV.

Belongs to the RNF12 family. As to quaternary structure, interacts with LIM/homeobox factors such as LHX3. Interacts with LDB1, LDB2 and SIN3A. Interacts with LIMK1. Interacts (via N-terminus) with TERF1. Interacts (via C-terminus) with ESR1. Expressed in many tissues.

It localises to the nucleus. It catalyses the reaction S-ubiquitinyl-[E2 ubiquitin-conjugating enzyme]-L-cysteine + [acceptor protein]-L-lysine = [E2 ubiquitin-conjugating enzyme]-L-cysteine + N(6)-ubiquitinyl-[acceptor protein]-L-lysine.. It functions in the pathway protein modification; protein ubiquitination. Its function is as follows. E3 ubiquitin-protein ligase. Acts as a negative coregulator for LIM homeodomain transcription factors by mediating the ubiquitination and subsequent degradation of LIM cofactors LDB1 and LDB2 and by mediating the recruitment the SIN3a/histone deacetylase corepressor complex. Ubiquitination and degradation of LIM cofactors LDB1 and LDB2 allows DNA-bound LIM homeodomain transcription factors to interact with other protein partners such as RLIM. Plays a role in telomere length-mediated growth suppression by mediating the ubiquitination and degradation of TERF1. By targeting ZFP42 for degradation, acts as an activator of random inactivation of X chromosome in the embryo, a stochastic process in which one X chromosome is inactivated to minimize sex-related dosage differences of X-encoded genes in somatic cells of female placental mammals. This is E3 ubiquitin-protein ligase RLIM (RLIM) from Homo sapiens (Human).